The sequence spans 71 residues: Small ribosomal subunit protein bS21 (71 aa).

Belongs to the bacterial ribosomal protein bS21 family.

This Photobacterium profundum (strain SS9) protein is Small ribosomal subunit protein bS21.